Consider the following 183-residue polypeptide: Shikimate kinase (183 aa).

25–30 (GAGKTT) contacts ATP. T29 lines the Mg(2+) pocket. D47, R71, and G93 together coordinate substrate. R131 serves as a coordination point for ATP. Residue R150 coordinates substrate.

This sequence belongs to the shikimate kinase family. Monomer. Mg(2+) serves as cofactor.

The protein localises to the cytoplasm. The enzyme catalyses shikimate + ATP = 3-phosphoshikimate + ADP + H(+). The protein operates within metabolic intermediate biosynthesis; chorismate biosynthesis; chorismate from D-erythrose 4-phosphate and phosphoenolpyruvate: step 5/7. Functionally, catalyzes the specific phosphorylation of the 3-hydroxyl group of shikimic acid using ATP as a cosubstrate. This Dechloromonas aromatica (strain RCB) protein is Shikimate kinase.